The following is a 506-amino-acid chain: Zinc finger protein MAGPIE (506 aa).

A disordered region spans residues 1-53 (MTTEDQTISSSGGYVQSSSTTDHVDHHHHDQHESLNPPLVKKKRNLPGNPDPE). Over residues 9–21 (SSSGGYVQSSSTT) the composition is skewed to low complexity. The segment covering 22-33 (DHVDHHHHDQHE) has biased composition (basic and acidic residues). Residue serine 60 is modified to Phosphoserine. 2 consecutive C2H2-type zinc fingers follow at residues 70–92 (FLCE…RRGH) and 111–141 (YVCP…CRKH). Positions 133 to 140 (IKKHFCRK) match the Nuclear localization signal motif. A C2H2-type 2; degenerate zinc finger spans residues 146-169 (WKCEKCAKRYAVQSDWKAHSKTCG). Zn(2+) contacts are provided by cysteine 148, cysteine 151, histidine 164, cysteine 168, cysteine 175, cysteine 177, histidine 190, and cysteine 194. Residues 173–196 (YRCDCGTIFSRRDSFITHRAFCDA) form a CCHC-type 2; atypical zinc finger. The interval 183 to 195 (RRDSFITHRAFCD) is SHR-binding.

As to quaternary structure, interacts with SHR, SCR and JKD, but not with itself. Interacts with SIEL. Binds to RGA and SCL3 competitively in the nucleus. As to expression, expressed in the ground tissue and stele cells of embryos and 2-days post-germination roots but not in the quiescent center. Detected only in cells that perform asymmetric cell divisions. In roots, present in cortex, endodermis, and pericycle layer.

The protein localises to the nucleus. Its function is as follows. Transcription factor that regulates tissue boundaries and asymmetric cell division. Contributes to the sequestration of 'SHORT-ROOT' to the nucleus. Interacts with the SCR and MGP promoters. Does not show transcription activity by itself, but regulates the transcription of downstream genes through interaction with other transcription factors. Binds DNA via its zinc fingers. Recognizes and binds to SCL3 promoter sequence 5'-AGACAA-3' to promote its expression when in complex with RGA. Positively involved in gibberellic acid (GA) signaling. The protein is Zinc finger protein MAGPIE of Arabidopsis thaliana (Mouse-ear cress).